We begin with the raw amino-acid sequence, 357 residues long: DNA primase small subunit PriS (357 aa).

Catalysis depends on residues Asp-105, Asp-107, and Asp-259.

The protein belongs to the eukaryotic-type primase small subunit family. In terms of assembly, heterodimer of a small subunit (PriS) and a large subunit (PriL). Mg(2+) serves as cofactor. It depends on Mn(2+) as a cofactor.

In terms of biological role, catalytic subunit of DNA primase, an RNA polymerase that catalyzes the synthesis of short RNA molecules used as primers for DNA polymerase during DNA replication. The small subunit contains the primase catalytic core and has DNA synthesis activity on its own. Binding to the large subunit stabilizes and modulates the activity, increasing the rate of DNA synthesis while decreasing the length of the DNA fragments, and conferring RNA synthesis capability. The DNA polymerase activity may enable DNA primase to also catalyze primer extension after primer synthesis. May also play a role in DNA repair. The chain is DNA primase small subunit PriS from Methanococcus maripaludis (strain C5 / ATCC BAA-1333).